Here is a 698-residue protein sequence, read N- to C-terminus: D-(-)-3-hydroxybutyrate oligomer hydrolase (698 aa).

The first 32 residues, 1-32, serve as a signal peptide directing secretion; that stretch reads MTTIRGGSRRASLPALALLGVLLGACHSDDNA. The Charge relay system role is filled by serine 310.

The protein belongs to the D-(-)-3-hydroxybutyrate oligomer hydrolase family.

It localises to the secreted. The catalysed reaction is (3R)-hydroxybutanoate dimer + H2O = 2 (R)-3-hydroxybutanoate + H(+). Its pathway is lipid metabolism; butanoate metabolism. In terms of biological role, participates in the degradation of poly-3-hydroxybutyrate (PHB). It works downstream of poly(3-hydroxybutyrate) depolymerase, hydrolyzing D(-)-3-hydroxybutyrate oligomers of various length (3HB-oligomers) into 3HB-monomers. The sequence is that of D-(-)-3-hydroxybutyrate oligomer hydrolase from Burkholderia thailandensis (strain ATCC 700388 / DSM 13276 / CCUG 48851 / CIP 106301 / E264).